A 330-amino-acid polypeptide reads, in one-letter code: Elongation factor Ts (330 aa).

The tract at residues 79-82 (TDFV) is involved in Mg(2+) ion dislocation from EF-Tu.

This sequence belongs to the EF-Ts family.

The protein localises to the cytoplasm. Its function is as follows. Associates with the EF-Tu.GDP complex and induces the exchange of GDP to GTP. It remains bound to the aminoacyl-tRNA.EF-Tu.GTP complex up to the GTP hydrolysis stage on the ribosome. The polypeptide is Elongation factor Ts (Bacteroides thetaiotaomicron (strain ATCC 29148 / DSM 2079 / JCM 5827 / CCUG 10774 / NCTC 10582 / VPI-5482 / E50)).